Consider the following 108-residue polypeptide: Translation initiation factor 1A (108 aa).

An S1-like domain is found at 11 to 85 (PSRDVPKPEE…NRCDILYKYG (75 aa)).

It belongs to the eIF-1A family.

Seems to be required for maximal rate of protein biosynthesis. Enhances ribosome dissociation into subunits and stabilizes the binding of the initiator Met-tRNA(I) to 40 S ribosomal subunits. The protein is Translation initiation factor 1A (eIF1A) of Saccharolobus islandicus (strain Y.N.15.51 / Yellowstone #2) (Sulfolobus islandicus).